Here is a 265-residue protein sequence, read N- to C-terminus: 4-hydroxy-tetrahydrodipicolinate reductase (265 aa).

NAD(+) is bound at residue 9-14; it reads GPRGRM. Position 37 (arginine 37) interacts with NADP(+). Residues 98 to 100 and 124 to 127 contribute to the NAD(+) site; these read GTT and APNF. Histidine 154 (proton donor/acceptor) is an active-site residue. Histidine 155 provides a ligand contact to (S)-2,3,4,5-tetrahydrodipicolinate. Lysine 158 (proton donor) is an active-site residue. Position 164–165 (164–165) interacts with (S)-2,3,4,5-tetrahydrodipicolinate; that stretch reads GT.

This sequence belongs to the DapB family.

It localises to the cytoplasm. It catalyses the reaction (S)-2,3,4,5-tetrahydrodipicolinate + NAD(+) + H2O = (2S,4S)-4-hydroxy-2,3,4,5-tetrahydrodipicolinate + NADH + H(+). The catalysed reaction is (S)-2,3,4,5-tetrahydrodipicolinate + NADP(+) + H2O = (2S,4S)-4-hydroxy-2,3,4,5-tetrahydrodipicolinate + NADPH + H(+). Its pathway is amino-acid biosynthesis; L-lysine biosynthesis via DAP pathway; (S)-tetrahydrodipicolinate from L-aspartate: step 4/4. Functionally, catalyzes the conversion of 4-hydroxy-tetrahydrodipicolinate (HTPA) to tetrahydrodipicolinate. The protein is 4-hydroxy-tetrahydrodipicolinate reductase of Geobacillus kaustophilus (strain HTA426).